The chain runs to 163 residues: uncharacterized protein (163 aa).

This is an uncharacterized protein from Homo sapiens (Human).